A 371-amino-acid chain; its full sequence is Glutamate 5-kinase (371 aa).

An ATP-binding site is contributed by lysine 14. Positions 54, 141, and 153 each coordinate substrate. 173–174 is a binding site for ATP; the sequence is TD. One can recognise a PUA domain in the interval 280-357; sequence AGDLILDDGA…TQIEKLLGYI (78 aa).

This sequence belongs to the glutamate 5-kinase family.

It is found in the cytoplasm. The enzyme catalyses L-glutamate + ATP = L-glutamyl 5-phosphate + ADP. It functions in the pathway amino-acid biosynthesis; L-proline biosynthesis; L-glutamate 5-semialdehyde from L-glutamate: step 1/2. Catalyzes the transfer of a phosphate group to glutamate to form L-glutamate 5-phosphate. This Aromatoleum aromaticum (strain DSM 19018 / LMG 30748 / EbN1) (Azoarcus sp. (strain EbN1)) protein is Glutamate 5-kinase.